A 180-amino-acid chain; its full sequence is Adenine phosphoribosyltransferase (180 aa).

This sequence belongs to the purine/pyrimidine phosphoribosyltransferase family. Homodimer.

It localises to the cytoplasm. It carries out the reaction AMP + diphosphate = 5-phospho-alpha-D-ribose 1-diphosphate + adenine. It participates in purine metabolism; AMP biosynthesis via salvage pathway; AMP from adenine: step 1/1. In terms of biological role, catalyzes a salvage reaction resulting in the formation of AMP, that is energically less costly than de novo synthesis. The polypeptide is Adenine phosphoribosyltransferase (Haemophilus influenzae (strain 86-028NP)).